The chain runs to 214 residues: GTP-binding nuclear protein Ran (214 aa).

A Small GTPase Ran-type domain is found at 6–170 (YIPQYKLILV…LWLARRLSNQ (165 aa)). 17-24 (DGGVGKTT) contacts GTP. The interval 36 to 44 (KKYIPTLGV) is switch-I. GTP is bound by residues G67, 121 to 124 (NKVD), and 149 to 151 (SAR). The switch-II stretch occupies residues 67-83 (GQEKFGGLRDGYYIKSD).

The protein belongs to the small GTPase superfamily. Ran family. Found in a nuclear export complex with RanGTP, exportin and pre-miRNA.

It is found in the nucleus. Its function is as follows. GTP-binding protein involved in nucleocytoplasmic transport. Required for the import of protein into the nucleus and also for RNA export. Involved in chromatin condensation and control of cell cycle. This Plasmodium falciparum protein is GTP-binding nuclear protein Ran.